Reading from the N-terminus, the 420-residue chain is L-cysteine:1D-myo-inositol 2-amino-2-deoxy-alpha-D-glucopyranoside ligase (420 aa).

C48 provides a ligand contact to Zn(2+). L-cysteinyl-5'-AMP contacts are provided by residues 48–51 (CGIT), T63, and 86–88 (NIT). A 'HIGH' region motif is present at residues 50-60 (ITPYDSTHLGH). The short motif at 192-197 (ERGGDP) is the 'ERGGDP' region element. W232 serves as a coordination point for L-cysteinyl-5'-AMP. C236 is a binding site for Zn(2+). Residue 254-256 (GSD) coordinates L-cysteinyl-5'-AMP. Residue H261 coordinates Zn(2+). I288 contributes to the L-cysteinyl-5'-AMP binding site. The 'KMSKS' region motif lies at 294 to 298 (KMSKS).

This sequence belongs to the class-I aminoacyl-tRNA synthetase family. MshC subfamily. As to quaternary structure, monomer. It depends on Zn(2+) as a cofactor.

The enzyme catalyses 1D-myo-inositol 2-amino-2-deoxy-alpha-D-glucopyranoside + L-cysteine + ATP = 1D-myo-inositol 2-(L-cysteinylamino)-2-deoxy-alpha-D-glucopyranoside + AMP + diphosphate + H(+). In terms of biological role, catalyzes the ATP-dependent condensation of GlcN-Ins and L-cysteine to form L-Cys-GlcN-Ins. The chain is L-cysteine:1D-myo-inositol 2-amino-2-deoxy-alpha-D-glucopyranoside ligase from Corynebacterium glutamicum (strain R).